Reading from the N-terminus, the 332-residue chain is Homoserine kinase (332 aa).

The protein belongs to the pseudomonas-type ThrB family.

The enzyme catalyses L-homoserine + ATP = O-phospho-L-homoserine + ADP + H(+). It functions in the pathway amino-acid biosynthesis; L-threonine biosynthesis; L-threonine from L-aspartate: step 4/5. This Burkholderia multivorans (strain ATCC 17616 / 249) protein is Homoserine kinase.